Reading from the N-terminus, the 222-residue chain is Adenylate kinase (222 aa).

10-15 lines the ATP pocket; the sequence is GAGKGT. The segment at 30–59 is NMP; sequence STGDMLRAAVKAGTPLGIEAKKVMDAGGLV. AMP is bound by residues Thr31, Arg36, 57–59, 85–88, and Gln92; these read GLV and GFPR. The tract at residues 122–159 is LID; it reads GRRVHVASGRTYHVKYNPPKNEGQDDETGDPLIQRDDD. ATP contacts are provided by residues Arg123 and 132-133; that span reads TY. Residues 135–162 are disordered; that stretch reads VKYNPPKNEGQDDETGDPLIQRDDDKEE. Positions 156 and 167 each coordinate AMP. Gly207 lines the ATP pocket.

This sequence belongs to the adenylate kinase family. In terms of assembly, monomer.

It is found in the cytoplasm. It catalyses the reaction AMP + ATP = 2 ADP. It participates in purine metabolism; AMP biosynthesis via salvage pathway; AMP from ADP: step 1/1. Its function is as follows. Catalyzes the reversible transfer of the terminal phosphate group between ATP and AMP. Plays an important role in cellular energy homeostasis and in adenine nucleotide metabolism. This is Adenylate kinase from Ralstonia nicotianae (strain ATCC BAA-1114 / GMI1000) (Ralstonia solanacearum).